The primary structure comprises 342 residues: Nuclear hormone receptor family member nhr-150 (342 aa).

The segment at residues 1-71 (MCQVCGAAEA…AGMTSKKIQS (71 aa)) is a DNA-binding region (nuclear receptor). The NR C4-type zinc finger occupies 2–22 (CQVCGAAEADLHFGGISCRAC). The NR C4-type; degenerate zinc-finger motif lies at 39–54 (CTCKTRILDSHPCRSC). Positions 94–341 (SARIIPRSSL…GFMEIIRESK (248 aa)) constitute an NR LBD domain.

It belongs to the nuclear hormone receptor family.

Its subcellular location is the nucleus. Functionally, orphan nuclear receptor. This is Nuclear hormone receptor family member nhr-150 (nhr-150) from Caenorhabditis elegans.